Here is a 547-residue protein sequence, read N- to C-terminus: Chaperonin GroEL 1 (547 aa).

Residues 30 to 33, lysine 51, 87 to 91, glycine 415, and aspartate 496 contribute to the ATP site; these read TLGP and DGTTT.

Belongs to the chaperonin (HSP60) family. Forms a cylinder of 14 subunits composed of two heptameric rings stacked back-to-back. Interacts with the co-chaperonin GroES.

Its subcellular location is the cytoplasm. The enzyme catalyses ATP + H2O + a folded polypeptide = ADP + phosphate + an unfolded polypeptide.. Functionally, together with its co-chaperonin GroES, plays an essential role in assisting protein folding. The GroEL-GroES system forms a nano-cage that allows encapsulation of the non-native substrate proteins and provides a physical environment optimized to promote and accelerate protein folding. This Gluconacetobacter diazotrophicus (strain ATCC 49037 / DSM 5601 / CCUG 37298 / CIP 103539 / LMG 7603 / PAl5) protein is Chaperonin GroEL 1.